The following is a 930-amino-acid chain: Isoleucine--tRNA ligase (930 aa).

The 'HIGH' region signature appears at 57–67 (PYANGNIHVGH). Position 554 (Glu-554) interacts with L-isoleucyl-5'-AMP. Positions 595–599 (KMSKS) match the 'KMSKS' region motif. Lys-598 provides a ligand contact to ATP. Residues Cys-888, Cys-891, Cys-908, and Cys-911 each coordinate Zn(2+).

This sequence belongs to the class-I aminoacyl-tRNA synthetase family. IleS type 1 subfamily. In terms of assembly, monomer. Zn(2+) serves as cofactor.

The protein resides in the cytoplasm. It carries out the reaction tRNA(Ile) + L-isoleucine + ATP = L-isoleucyl-tRNA(Ile) + AMP + diphosphate. Its function is as follows. Catalyzes the attachment of isoleucine to tRNA(Ile). As IleRS can inadvertently accommodate and process structurally similar amino acids such as valine, to avoid such errors it has two additional distinct tRNA(Ile)-dependent editing activities. One activity is designated as 'pretransfer' editing and involves the hydrolysis of activated Val-AMP. The other activity is designated 'posttransfer' editing and involves deacylation of mischarged Val-tRNA(Ile). The sequence is that of Isoleucine--tRNA ligase from Streptococcus pneumoniae (strain ATCC BAA-255 / R6).